Reading from the N-terminus, the 523-residue chain is Glutamate--cysteine ligase, chloroplastic (523 aa).

A disulfide bridge links C187 with C407.

Belongs to the carboxylate-amine ligase family. Glutamate--cysteine ligase type 2 subfamily. In terms of assembly, homodimer or monomer when oxidized or reduced, respectively. In terms of processing, the Cys-187-Cys-407 disulfide bridge is known to modulate the enzyme activity according to the redox status. The oxidized form constitutes the active enzyme.

It is found in the plastid. Its subcellular location is the chloroplast. The enzyme catalyses L-cysteine + L-glutamate + ATP = gamma-L-glutamyl-L-cysteine + ADP + phosphate + H(+). It functions in the pathway sulfur metabolism; glutathione biosynthesis; glutathione from L-cysteine and L-glutamate: step 1/2. This chain is Glutamate--cysteine ligase, chloroplastic (GSH1), found in Solanum lycopersicum (Tomato).